Consider the following 135-residue polypeptide: C-type Lectin CRL (135 aa).

Disulfide bonds link Cys-3–Cys-14, Cys-31–Cys-131, Cys-38–Cys-133, and Cys-106–Cys-123. In terms of domain architecture, C-type lectin spans 10–132; that stretch reads MNGLCYKIFN…CESKDAFLCQ (123 aa). Ca(2+)-binding residues include Gln-96, Asp-98, Glu-104, Asn-119, and Asp-120. The short motif at 96–98 is the Galactose-binding element; sequence QPD.

Belongs to the true venom lectin family. In terms of assembly, homodimer; disulfide-linked. Expressed by the venom gland.

Its subcellular location is the secreted. Functionally, beta-galactoside and N-acetylgalactosamine (GalNAc) specific C-type lectin. This chain is C-type Lectin CRL, found in Crotalus ruber ruber (Red diamond rattlesnake).